The chain runs to 155 residues: Ribonuclease HI (155 aa).

Positions 1–142 constitute an RNase H type-1 domain; sequence MTKQVEIFTD…CDELARAAAE (142 aa). Mg(2+) contacts are provided by Asp-10, Glu-48, Asp-70, and Asp-134.

The protein belongs to the RNase H family. Monomer. Mg(2+) serves as cofactor.

Its subcellular location is the cytoplasm. It carries out the reaction Endonucleolytic cleavage to 5'-phosphomonoester.. In terms of biological role, endonuclease that specifically degrades the RNA of RNA-DNA hybrids. The sequence is that of Ribonuclease HI from Vibrio vulnificus (strain CMCP6).